Here is a 123-residue protein sequence, read N- to C-terminus: Small ribosomal subunit protein uS12c (123 aa).

Belongs to the universal ribosomal protein uS12 family. Part of the 30S ribosomal subunit.

The protein resides in the plastid. Its subcellular location is the chloroplast. With S4 and S5 plays an important role in translational accuracy. Located at the interface of the 30S and 50S subunits. The polypeptide is Small ribosomal subunit protein uS12c (rps12) (Anthoceros angustus (Hornwort)).